A 159-amino-acid chain; its full sequence is Ribosomal RNA large subunit methyltransferase H (159 aa).

Residues Leu76, Gly108, and 127–132 each bind S-adenosyl-L-methionine; that span reads FSKMTF.

It belongs to the RNA methyltransferase RlmH family. Homodimer.

Its subcellular location is the cytoplasm. It catalyses the reaction pseudouridine(1915) in 23S rRNA + S-adenosyl-L-methionine = N(3)-methylpseudouridine(1915) in 23S rRNA + S-adenosyl-L-homocysteine + H(+). Specifically methylates the pseudouridine at position 1915 (m3Psi1915) in 23S rRNA. This Lachnospira eligens (strain ATCC 27750 / DSM 3376 / VPI C15-48 / C15-B4) (Eubacterium eligens) protein is Ribosomal RNA large subunit methyltransferase H.